Reading from the N-terminus, the 171-residue chain is Odorant-binding protein 1b (171 aa).

Positions 1–19 (MMVKFLLLALVFGLAHVHA) are cleaved as a signal peptide. 2 disulfide bridges follow: C57–C61 and C76–C169.

This sequence belongs to the calycin superfamily. Lipocalin family. As to quaternary structure, may form a heterodimer with OBP1A. The N-terminus may be blocked. As to expression, expressed in nasal mucosa (at protein level). Specifically detected in septal and lateral nasal glands.

It localises to the secreted. Functionally, binds the chemical odorant 2-isobutyl-3-methoxypyrazine. This chain is Odorant-binding protein 1b, found in Mus musculus (Mouse).